The following is a 469-amino-acid chain: Melanopsin (469 aa).

The Extracellular portion of the chain corresponds to 1-71; it reads MDSPPGPTAP…VDVPDHAHYI (71 aa). N30 is a glycosylation site (N-linked (GlcNAc...) asparagine). Residues 72–92 form a helical membrane-spanning segment; sequence LGTVILLVGLTGMLGNLTVIY. The Cytoplasmic portion of the chain corresponds to 93 to 106; the sequence is TFCRSRSLRTPANM. Residues 107 to 127 traverse the membrane as a helical segment; it reads LIINLAVSDFLMSFTQAPVFF. The Extracellular segment spans residues 128–143; the sequence is ASSLYKKWLFGETGCE. The cysteines at positions 142 and 220 are disulfide-linked. Residues 144 to 164 form a helical membrane-spanning segment; it reads FYAFCGAVLGITSMITLTAIA. The Cytoplasmic segment spans residues 165–187; it reads LDRYLVITRPLATIGMGSKRRTA. A helical membrane pass occupies residues 188-208; sequence LVLLGIWLYALAWSLPPFFGW. Over 209 to 237 the chain is Extracellular; the sequence is SAYVPEGLLTSCSWDYVTFTPQVRAYTML. Residues 238–258 traverse the membrane as a helical segment; that stretch reads LFCFVFFLPLLVIIFCYISIF. Residues 259 to 295 lie on the Cytoplasmic side of the membrane; it reads RAIRETGRACEGWSESPQRRRQWHRLQSEWKMAKVAL. Residues 296-316 traverse the membrane as a helical segment; sequence IVILLFVLSWAPYSTVALVAF. The Extracellular segment spans residues 317–328; the sequence is AGYSHILTPYMS. Residues 329–349 traverse the membrane as a helical segment; the sequence is SVPAVIAKASAIHNPIVYAIT. An N6-(retinylidene)lysine modification is found at K336. The Cytoplasmic portion of the chain corresponds to 350 to 469; it reads HPKYRAAIAQ…SLDLGMQDAP (120 aa). Residues 409-469 form a disordered region; it reads GSESEVGWTD…SLDLGMQDAP (61 aa).

The protein belongs to the G-protein coupled receptor 1 family. Opsin subfamily.

The protein resides in the cell membrane. The protein localises to the cell projection. It is found in the axon. It localises to the dendrite. Its subcellular location is the perikaryon. Its function is as follows. Photoreceptor that binds cis-retinaldehydes. Contributes to pupillar reflex, photoentrainment and other non-image forming responses to light. May be involved in the optokinetic visual tracking response. May be involved in the regulation of retinal hyaloid vessel growth and regression. This is Melanopsin (OPN4) from Phodopus sungorus (Striped hairy-footed hamster).